We begin with the raw amino-acid sequence, 60 residues long: Large ribosomal subunit protein bL32 (60 aa).

Residues 1-21 (MAVPRNRHSNARKNIRRSHDA) form a disordered region.

This sequence belongs to the bacterial ribosomal protein bL32 family.

The chain is Large ribosomal subunit protein bL32 from Chlamydia felis (strain Fe/C-56) (Chlamydophila felis).